The following is a 233-amino-acid chain: DKIVGPGNIYVATAKRAVFGQVGIDMVAGPSEILVVCDGATDPDWIAMDLFSQAEHDEDAQSILLSWDADFLDRVAASIERLLPSMERETIIATALRGRGAMILARDLDDAIAVANRIAPEHLELSVEDPQAIVGRIRHAGAIFMGRYTAEAIGDYCAGPNHVLPTSRTARFSSPLGVYDFQKRSSLIMASAAGAAQLAKTASVLARGEGLTAHARSAEYRGAVEPAAEPGLS.

The substrate site is built by Ser-31, Gln-53, and His-56. Positions 53 and 56 each coordinate Zn(2+). Residues Glu-121 and His-122 each act as proton acceptor in the active site. His-122, Asp-155, Glu-209, and His-214 together coordinate substrate. Position 155 (Asp-155) interacts with Zn(2+). His-214 provides a ligand contact to Zn(2+).

Belongs to the histidinol dehydrogenase family. Zn(2+) is required as a cofactor.

It carries out the reaction L-histidinol + 2 NAD(+) + H2O = L-histidine + 2 NADH + 3 H(+). The protein operates within amino-acid biosynthesis; L-histidine biosynthesis; L-histidine from 5-phospho-alpha-D-ribose 1-diphosphate: step 9/9. Its function is as follows. Catalyzes the sequential NAD-dependent oxidations of L-histidinol to L-histidinaldehyde and then to L-histidine. The protein is Histidinol dehydrogenase (hisD) of Thiocapsa roseopersicina.